A 241-amino-acid chain; its full sequence is Proteasome subunit alpha (241 aa).

It belongs to the peptidase T1A family. In terms of assembly, the 20S proteasome core is composed of 14 alpha and 14 beta subunits that assemble into four stacked heptameric rings, resulting in a barrel-shaped structure. The two inner rings, each composed of seven catalytic beta subunits, are sandwiched by two outer rings, each composed of seven alpha subunits. The catalytic chamber with the active sites is on the inside of the barrel. Has a gated structure, the ends of the cylinder being occluded by the N-termini of the alpha-subunits. Is capped at one or both ends by the proteasome regulatory ATPase, PAN.

The protein localises to the cytoplasm. The formation of the proteasomal ATPase PAN-20S proteasome complex, via the docking of the C-termini of PAN into the intersubunit pockets in the alpha-rings, triggers opening of the gate for substrate entry. Interconversion between the open-gate and close-gate conformations leads to a dynamic regulation of the 20S proteasome proteolysis activity. Functionally, component of the proteasome core, a large protease complex with broad specificity involved in protein degradation. This chain is Proteasome subunit alpha, found in Saccharolobus solfataricus (strain ATCC 35092 / DSM 1617 / JCM 11322 / P2) (Sulfolobus solfataricus).